A 556-amino-acid polypeptide reads, in one-letter code: Dihydroxy-acid dehydratase (556 aa).

Asp78 contacts Mg(2+). Position 119 (Cys119) interacts with [2Fe-2S] cluster. Mg(2+) contacts are provided by Asp120 and Lys121. Lys121 bears the N6-carboxylysine mark. Residue Cys191 coordinates [2Fe-2S] cluster. A Mg(2+)-binding site is contributed by Glu442. Ser468 acts as the Proton acceptor in catalysis.

The protein belongs to the IlvD/Edd family. Homodimer. The cofactor is [2Fe-2S] cluster. Mg(2+) serves as cofactor.

It carries out the reaction (2R)-2,3-dihydroxy-3-methylbutanoate = 3-methyl-2-oxobutanoate + H2O. It catalyses the reaction (2R,3R)-2,3-dihydroxy-3-methylpentanoate = (S)-3-methyl-2-oxopentanoate + H2O. The protein operates within amino-acid biosynthesis; L-isoleucine biosynthesis; L-isoleucine from 2-oxobutanoate: step 3/4. It functions in the pathway amino-acid biosynthesis; L-valine biosynthesis; L-valine from pyruvate: step 3/4. Its function is as follows. Functions in the biosynthesis of branched-chain amino acids. Catalyzes the dehydration of (2R,3R)-2,3-dihydroxy-3-methylpentanoate (2,3-dihydroxy-3-methylvalerate) into 2-oxo-3-methylpentanoate (2-oxo-3-methylvalerate) and of (2R)-2,3-dihydroxy-3-methylbutanoate (2,3-dihydroxyisovalerate) into 2-oxo-3-methylbutanoate (2-oxoisovalerate), the penultimate precursor to L-isoleucine and L-valine, respectively. This is Dihydroxy-acid dehydratase from Clostridium beijerinckii (strain ATCC 51743 / NCIMB 8052) (Clostridium acetobutylicum).